A 644-amino-acid chain; its full sequence is Protein cueball (644 aa).

Positions 1–26 (MIRIRFGMDVLLVLLLATCLLTPAHG) are cleaved as a signal peptide. The Extracellular segment spans residues 27–531 (TPLEWDFAVT…VCLTPRVWTS (505 aa)). N-linked (GlcNAc...) asparagine glycans are attached at residues N82 and N108. LDL-receptor class B repeat units follow at residues 121-166 (MNLF…DVCR), 167-211 (RKLY…DQLS), and 212-257 (DRLF…TNDA). N-linked (GlcNAc...) asparagine glycans are attached at residues N175 and N190. Positions 280-301 (TTTSKPEEEDSTDSTDFTDPEP) are disordered. Acidic residues predominate over residues 286–301 (EEEDSTDSTDFTDPEP). The N-linked (GlcNAc...) asparagine glycan is linked to N313. 2 EGF-like domains span residues 398–430 (EIRE…FTGE) and 433–471 (ELSV…ARCE). 5 disulfide bridges follow: C402–C411, C406–C421, C437–C447, C441–C459, and C461–C470. N-linked (GlcNAc...) asparagine glycans are attached at residues N473 and N508. The chain crosses the membrane as a helical span at residues 532 to 552 (SVIIILVVGIVSSLLLVAVIV). At 553-644 (HGIRRLYKPK…LIHNMEDDLY (92 aa)) the chain is on the cytoplasmic side.

Belongs to the cueball family.

The protein localises to the cell membrane. Functionally, has a role in spermatogenesis and oogenesis. This Drosophila sechellia (Fruit fly) protein is Protein cueball.